The primary structure comprises 351 residues: Meiotically up-regulated gene 1 protein (351 aa).

It localises to the cytoplasm. Functionally, required for correct meiotic chromosome segregation. This Schizosaccharomyces pombe (strain 972 / ATCC 24843) (Fission yeast) protein is Meiotically up-regulated gene 1 protein (mug1).